Consider the following 473-residue polypeptide: Monocarboxylate transporter 4 (473 aa).

Over 1–17 (MGAVVVDDGPSGVKAPD) the chain is Cytoplasmic. The helical transmembrane segment at 18-38 (GGWGWAVLFGCFIITGFSYAF) threads the bilayer. Over 39-61 (PKAVSVFFKELIREFGVGYSDTA) the chain is Extracellular. Residues 62-82 (WISSILLAMLYGTGPLCSVCV) form a helical membrane-spanning segment. The Cytoplasmic segment spans residues 83–91 (NRFGCRPVM). The chain crosses the membrane as a helical span at residues 92 to 112 (LVGGLFASMGMVIASFCTSIV). Over 113-115 (QIY) the chain is Extracellular. Residues 116–136 (LTAGVITGLGLALNFQPSLIM) form a helical membrane-spanning segment. The Cytoplasmic segment spans residues 137–149 (LNRYFDKRRPLAN). The chain crosses the membrane as a helical span at residues 150-170 (GLSAAGSPVFLCALSPLGQIL). Over 171-179 (QHEYGWRGG) the chain is Extracellular. The helical transmembrane segment at 180–200 (FLILGGMLLNCCVCGALMRPL) threads the bilayer. The Cytoplasmic portion of the chain corresponds to 201–231 (EPPKKSEATKEPAEKKAKKKLLDFSVFKDGG). Residues 232 to 252 (FVIYTLAASIMVLGLFVPPVF) form a helical membrane-spanning segment. The Extracellular segment spans residues 253 to 268 (VVSYAKDLGYQDTKAA). The chain crosses the membrane as a helical span at residues 269-289 (FLLTILGFIDIFARPICGMVA). Residues 290–297 (GLKWVRPR) are Cytoplasmic-facing. A helical membrane pass occupies residues 298 to 318 (CVYLFSFAMIFNGFTDLMGSM). At 319–321 (SVD) the chain is on the extracellular side. The chain crosses the membrane as a helical span at residues 322–342 (YGGLVVFCIFFGISYGMVGAL). Over 343-358 (QFEVLMAIVGTQKFSS) the chain is Cytoplasmic. A helical transmembrane segment spans residues 359 to 379 (AIGLVLLAEAMAVLIGPPSAG). The Extracellular segment spans residues 380 to 388 (KLLDLTRRY). Residues 389-409 (MFVFIIAGIEVTTSALVLALG) form a helical membrane-spanning segment. Residues 410-473 (NFFCIKKKPA…EVVTNPETCV (64 aa)) are Cytoplasmic-facing. Residues 421 to 447 (PHTKEAAAEREELNKSEDKTPEDAKVD) are disordered. 2 basolateral sorting signal regions span residues 427-449 (AAEREELNKSEDKTPEDAKVDSI) and 449-473 (IEVEQFLKDEPEKNGEVVTNPETCV).

This sequence belongs to the major facilitator superfamily. Monocarboxylate porter (TC 2.A.1.13) family. In terms of assembly, interacts with BSG; interaction mediates SLC16A3 targeting to the plasma membrane.

Its subcellular location is the cell membrane. The protein resides in the basolateral cell membrane. It carries out the reaction (S)-lactate(in) + H(+)(in) = (S)-lactate(out) + H(+)(out). The enzyme catalyses pyruvate(out) + H(+)(out) = pyruvate(in) + H(+)(in). In terms of biological role, proton-dependent transporter of monocarboxylates such as L-lactate and pyruvate. Plays a predominant role in the L-lactate efflux from highly glycolytic cells. The chain is Monocarboxylate transporter 4 (SLC16A3) from Gallus gallus (Chicken).